The sequence spans 24 residues: Neurotoxin-2 (24 aa).

Residues 1-24 (EDGYLLNRDTGCKVSCGTCRYCND) form the LCN-type CS-alpha/beta domain.

Belongs to the long (4 C-C) scorpion toxin superfamily. Sodium channel inhibitor family. Alpha subfamily. In terms of tissue distribution, expressed by the venom gland.

It localises to the secreted. Functionally, binds to sodium channels (Nav) and inhibits the inactivation of the activated channels, thereby blocking neuronal transmission. This toxin is active against mammals. The polypeptide is Neurotoxin-2 (Hottentotta tamulus (Eastern Indian scorpion)).